Reading from the N-terminus, the 288-residue chain is Glycine--tRNA ligase alpha subunit (288 aa).

The protein belongs to the class-II aminoacyl-tRNA synthetase family. As to quaternary structure, tetramer of two alpha and two beta subunits.

It localises to the cytoplasm. The enzyme catalyses tRNA(Gly) + glycine + ATP = glycyl-tRNA(Gly) + AMP + diphosphate. This chain is Glycine--tRNA ligase alpha subunit, found in Rickettsia massiliae (strain Mtu5).